A 137-amino-acid chain; its full sequence is DNA-directed RNA polymerase subunit omega (137 aa).

The interval 78–137 is disordered; the sequence is DEPEPEAVPLLSSSPAAAAVAPQAASGDDNDIQFDRMSEEDLLRGLENLAPPTETEDEGD. A compositionally biased stretch (low complexity) spans 84 to 103; sequence AVPLLSSSPAAAAVAPQAAS. Over residues 110–121 the composition is skewed to basic and acidic residues; the sequence is QFDRMSEEDLLR.

Belongs to the RNA polymerase subunit omega family. The RNAP catalytic core consists of 2 alpha, 1 beta, 1 beta' and 1 omega subunit. When a sigma factor is associated with the core the holoenzyme is formed, which can initiate transcription.

It carries out the reaction RNA(n) + a ribonucleoside 5'-triphosphate = RNA(n+1) + diphosphate. Its function is as follows. Promotes RNA polymerase assembly. Latches the N- and C-terminal regions of the beta' subunit thereby facilitating its interaction with the beta and alpha subunits. The polypeptide is DNA-directed RNA polymerase subunit omega (Methylobacterium sp. (strain 4-46)).